The chain runs to 335 residues: NAC domain-containing protein 60 (335 aa).

Positions 14–156 (TFPGFKFSPT…ALVICRLRRN (143 aa)) constitute an NAC domain. A DNA-binding region spans residues 112-162 (IGTKRTLVFHIGRAPKGGRTEWLMHEYCMIGVSLDALVICRLRRNTEFQGS). The helical transmembrane segment at 315–335 (ARWDVVVWLLVMIAVLVFYLV) threads the bilayer.

In terms of tissue distribution, expressed in roots, rosette leaves, cauline leaves, shoot apex, stems and flowers.

It localises to the membrane. The protein localises to the nucleus. Its function is as follows. Transcriptional activator activated by proteolytic cleavage through regulated intramembrane proteolysis (RIP). Transcription factor involved in modulation of abscisic acid (ABA) signaling. Attenuates ABA sensitivity and glucose-induced ABA accumulation. Reduces the expression of ABI4 gene. The polypeptide is NAC domain-containing protein 60 (Arabidopsis thaliana (Mouse-ear cress)).